The primary structure comprises 178 residues: Interleukin-10 (178 aa).

The first 18 residues, 1-18 (MHSSALLCCLVLLTGVRA), serve as a signal peptide directing secretion. Disulfide bonds link Cys-30-Cys-126 and Cys-80-Cys-132. An N-linked (GlcNAc...) asparagine glycan is attached at Asn-134.

It belongs to the IL-10 family. As to quaternary structure, homodimer. Interacts with IL10RA and IL10RB.

The protein resides in the secreted. In terms of biological role, major immune regulatory cytokine that acts on many cells of the immune system where it has profound anti-inflammatory functions, limiting excessive tissue disruption caused by inflammation. Mechanistically, IL10 binds to its heterotetrameric receptor comprising IL10RA and IL10RB leading to JAK1 and STAT2-mediated phosphorylation of STAT3. In turn, STAT3 translocates to the nucleus where it drives expression of anti-inflammatory mediators. Targets antigen-presenting cells (APCs) such as macrophages and monocytes and inhibits their release of pro-inflammatory cytokines including granulocyte-macrophage colony-stimulating factor /GM-CSF, granulocyte colony-stimulating factor/G-CSF, IL-1 alpha, IL-1 beta, IL-6, IL-8 and TNF-alpha. Also interferes with antigen presentation by reducing the expression of MHC-class II and co-stimulatory molecules, thereby inhibiting their ability to induce T cell activation. In addition, controls the inflammatory response of macrophages by reprogramming essential metabolic pathways including mTOR signaling. The sequence is that of Interleukin-10 (IL10) from Macaca mulatta (Rhesus macaque).